The primary structure comprises 246 residues: Ribosomal RNA small subunit methyltransferase J (246 aa).

S-adenosyl-L-methionine contacts are provided by residues 115–116 (ER) and D169.

It belongs to the methyltransferase superfamily. RsmJ family.

The protein localises to the cytoplasm. The catalysed reaction is guanosine(1516) in 16S rRNA + S-adenosyl-L-methionine = N(2)-methylguanosine(1516) in 16S rRNA + S-adenosyl-L-homocysteine + H(+). In terms of biological role, specifically methylates the guanosine in position 1516 of 16S rRNA. The chain is Ribosomal RNA small subunit methyltransferase J from Buchnera aphidicola subsp. Acyrthosiphon pisum (strain APS) (Acyrthosiphon pisum symbiotic bacterium).